We begin with the raw amino-acid sequence, 169 residues long: Ion-translocating oxidoreductase complex subunit B (169 aa).

The tract at residues 1 to 23 (MIISIIIFSILSFILGVIVSLVS) is hydrophobic. One can recognise a 4Fe-4S domain in the interval 30–89 (SNLSLINDIDELLPQMQCAQCGYPGCYAYSQAIVDGNENIYKCIPGGKEVVLKLENLLNK). Residues Cys47, Cys50, Cys55, Cys72, Cys116, Cys119, Cys122, Cys126, Cys146, Cys149, Cys152, and Cys156 each coordinate [4Fe-4S] cluster. 4Fe-4S ferredoxin-type domains lie at 107–136 (SIVEIDENNCVGCSKCRLVCPVDAVVGTYN) and 137–166 (FRHTVLIDSCTGCNLCIPLCPTNCIKKKIM).

It belongs to the 4Fe4S bacterial-type ferredoxin family. RnfB subfamily. In terms of assembly, the complex is composed of six subunits: RnfA, RnfB, RnfC, RnfD, RnfE and RnfG. [4Fe-4S] cluster is required as a cofactor.

The protein localises to the cell inner membrane. Part of a membrane-bound complex that couples electron transfer with translocation of ions across the membrane. The chain is Ion-translocating oxidoreductase complex subunit B from Buchnera aphidicola subsp. Baizongia pistaciae (strain Bp).